The sequence spans 121 residues: Large ribosomal subunit protein bL12 (121 aa).

Belongs to the bacterial ribosomal protein bL12 family. As to quaternary structure, homodimer. Part of the ribosomal stalk of the 50S ribosomal subunit. Forms a multimeric L10(L12)X complex, where L10 forms an elongated spine to which 2 to 4 L12 dimers bind in a sequential fashion. Binds GTP-bound translation factors.

In terms of biological role, forms part of the ribosomal stalk which helps the ribosome interact with GTP-bound translation factors. Is thus essential for accurate translation. This chain is Large ribosomal subunit protein bL12, found in Leuconostoc citreum (strain KM20).